Reading from the N-terminus, the 289-residue chain is Ribosomal protein L11 methyltransferase (289 aa).

S-adenosyl-L-methionine is bound by residues Thr142, Gly163, Asp185, and Asn226.

This sequence belongs to the methyltransferase superfamily. PrmA family.

The protein localises to the cytoplasm. It carries out the reaction L-lysyl-[protein] + 3 S-adenosyl-L-methionine = N(6),N(6),N(6)-trimethyl-L-lysyl-[protein] + 3 S-adenosyl-L-homocysteine + 3 H(+). In terms of biological role, methylates ribosomal protein L11. In Legionella pneumophila (strain Corby), this protein is Ribosomal protein L11 methyltransferase.